The chain runs to 754 residues: Aspartyl/asparaginyl beta-hydroxylase (754 aa).

The interval 1–48 is disordered; the sequence is MAPRKNAKGGGGNSSSSSSGSPTGCTSGGSSSPGARRETKQGGLKNGR. At 1 to 56 the chain is on the cytoplasmic side; sequence MAPRKNAKGGGGNSSSSSSGSPTGCTSGGSSSPGARRETKQGGLKNGRKGGLSGSS. Over residues 14 to 34 the composition is skewed to low complexity; that stretch reads SSSSSSGSPTGCTSGGSSSPG. Ser-15 is subject to Phosphoserine. Residues 57 to 77 traverse the membrane as a helical; Signal-anchor for type II membrane protein segment; that stretch reads FFTWFMVIALLGVWTSVAVVW. Topologically, residues 78–754 are lumenal; the sequence is FDLVDYEEVL…PHQRRSLPAI (677 aa). N-linked (GlcNAc...) asparagine glycosylation occurs at Asn-96. Residues Asp-109, Asp-111, Asp-113, Asp-115, and Asp-120 each contribute to the Ca(2+) site. Disordered stretches follow at residues 176–197 and 247–326; these read VYSEPGENLPQEPEGPAEELQP and EQEN…KKKK. Composition is skewed to basic and acidic residues over residues 261 to 284 and 309 to 318; these read DAERTYQETDDVTYRDYDEQDHAV and TNKKADEPGK. TPR repeat units lie at residues 337–370, 378–411, 450–483, 485–517, and 521–553; these read IKAELDAAEKLRKRGKIEEAVNAFEELVRKYPQS, AQCEDDLAEKRRSNEILRRAIETYQEAASLPDAP, TALKNDLGVGYLLIGDNDSAKKVYEEVLSVTPND, FAKVHYGFILKAQNKIAESIPYLKEGIESGDPG, and GRFYFHLGDAMQRVGNKEAYRWYELGHQRGHFA. An N-linked (GlcNAc...) asparagine glycan is attached at Asn-466. Trp-621 lines the 2-oxoglutarate pocket. Cys-637 and Cys-644 are disulfide-bonded. Residue Ser-664 participates in 2-oxoglutarate binding. His-675 lines the Fe cation pocket. 2-oxoglutarate is bound at residue 684–686; sequence RMH. N-linked (GlcNAc...) asparagine glycosylation is present at Asn-702. His-721 provides a ligand contact to Fe cation. Arg-731 contributes to the 2-oxoglutarate binding site.

Belongs to the aspartyl/asparaginyl beta-hydroxylase family. Monomer. Fe cation serves as cofactor. Post-translationally, might be processed to the 56 kDa (AA 289-754) or 52 kDa (AA 311-754) forms in the lumen of the endoplasmic reticulum.

It is found in the endoplasmic reticulum membrane. It carries out the reaction L-aspartyl-[protein] + 2-oxoglutarate + O2 = 3-hydroxy-L-aspartyl-[protein] + succinate + CO2. Specifically hydroxylates an Asp or Asn residue in certain epidermal growth factor-like (EGF) domains of a number of proteins. This chain is Aspartyl/asparaginyl beta-hydroxylase (ASPH), found in Bos taurus (Bovine).